Consider the following 690-residue polypeptide: F-box/LRR-repeat protein 5 (690 aa).

Residues 1–159 (MAPFPDEVDV…IKKKVIAQHC (159 aa)) are hemerythrin-like. The Fe(3+) site is built by His15, His57, Glu58, Glu61, His80, His126, and Glu130. Residues 202-248 (STGITHLPPEVMLSIFSYLNPQELCRCSQVSTKWSQLAKTGSLWKHL) enclose the F-box domain. LRR repeat units lie at residues 340-364 (SSAV…LDLT), 365-392 (QTDI…DLSG), 393-418 (CEKI…QSGF), 478-507 (VWML…CVME), 575-606 (TTLP…SLSG), 607-634 (CYQI…NLSG), and 635-660 (CLTV…YFYY). Cys661, Cys675, Cys685, and Cys686 together coordinate [2Fe-2S] cluster.

As to quaternary structure, part of a SCF (SKP1-cullin-F-box) protein ligase complex. Interacts with ACO1/IRP1, IREB2/IRP2; the interaction depends on the [2Fe-2S] cluster. Interacts with DCTN1/p150-glued. Requires [2Fe-2S] cluster as cofactor. Polybiquitinated upon iron and oxygen depletion, leading to its degradation by the proteasome. Ubiquitination is regulated by the hemerythrin-like region that acts as an oxygen and iron sensor. Undergoes constitutive ubiquitin-dependent degradation at the steady state by HERC2. As to expression, ubiquitously expressed. Highly expressed in early embryogenesis with expression decreasing as the embryo progresses through development (E11 and E15).

The protein localises to the cytoplasm. It is found in the perinuclear region. The protein resides in the nucleus. Its pathway is protein modification; protein ubiquitination. Its activity is regulated as follows. An iron-sulfur cluster promotes IRP2 polyubiquitination and degradation in response to both iron and oxygen concentrations. Component of some SCF (SKP1-cullin-F-box) protein ligase complex that plays a central role in iron homeostasis by promoting the ubiquitination and subsequent degradation of IREB2/IRP2. The C-terminal domain of FBXL5 contains a redox-sensitive [2Fe-2S] cluster that, upon oxidation, promotes binding to IRP2 to effect its oxygen-dependent degradation. Under iron deficiency conditions, the N-terminal hemerythrin-like (Hr) region, which contains a diiron metal center, cannot bind iron and undergoes conformational changes that destabilize the FBXL5 protein and cause its ubiquitination and degradation. When intracellular iron levels start rising, the Hr region is stabilized. Additional increases in iron levels facilitate the assembly and incorporation of a redox active [2Fe-2S] cluster in the C-terminal domain. Only when oxygen level is high enough to maintain the cluster in its oxidized state can FBXL5 recruit IRP2 as a substrate for polyubiquination and degradation. Promotes ubiquitination and subsequent degradation of the dynactin complex component DCTN1. Within the nucleus, promotes the ubiquitination of SNAI1; preventing its interaction with DNA and promoting its degradation. Negatively regulates DNA damage response by mediating the ubiquitin-proteasome degradation of the DNA repair protein NABP2. In Mus musculus (Mouse), this protein is F-box/LRR-repeat protein 5 (Fbxl5).